A 127-amino-acid polypeptide reads, in one-letter code: Photosystem II extrinsic protein U (127 aa).

The first 31 residues, 1 to 31, serve as a signal peptide directing secretion; that stretch reads MSRLFRRLSTLLLCSLLVLGVWLTQPLSVQA.

Belongs to the PsbU family. As to quaternary structure, PSII is composed of 1 copy each of membrane proteins PsbA, PsbB, PsbC, PsbD, PsbE, PsbF, PsbH, PsbI, PsbJ, PsbK, PsbL, PsbM, PsbT, PsbX, PsbY, PsbZ, Psb30/Ycf12, peripheral proteins PsbO, CyanoQ (PsbQ), PsbU, PsbV and a large number of cofactors. It forms dimeric complexes.

The protein resides in the cellular thylakoid membrane. Functionally, one of the extrinsic, lumenal subunits of photosystem II (PSII). PSII is a light-driven water plastoquinone oxidoreductase, using light energy to abstract electrons from H(2)O, generating a proton gradient subsequently used for ATP formation. The extrinsic proteins stabilize the structure of photosystem II oxygen-evolving complex (OEC), the ion environment of oxygen evolution and protect the OEC against heat-induced inactivation. This is Photosystem II extrinsic protein U from Synechococcus sp. (strain RCC307).